Here is a 704-residue protein sequence, read N- to C-terminus: Polyribonucleotide nucleotidyltransferase (704 aa).

Mg(2+) contacts are provided by aspartate 487 and aspartate 493. A KH domain is found at 554–613; the sequence is PRLLTIKIHPDKIREVIGKGGSTIQAITKETGTQIDIQDDGTIIIASVNAIAAQAAKSRI. The S1 motif domain occupies 623-691; sequence GRIYEGKVAK…KQGRIRLSIK (69 aa).

It belongs to the polyribonucleotide nucleotidyltransferase family. As to quaternary structure, component of the RNA degradosome, which is a multiprotein complex involved in RNA processing and mRNA degradation. Requires Mg(2+) as cofactor.

The protein resides in the cytoplasm. It catalyses the reaction RNA(n+1) + phosphate = RNA(n) + a ribonucleoside 5'-diphosphate. In terms of biological role, involved in mRNA degradation. Catalyzes the phosphorolysis of single-stranded polyribonucleotides processively in the 3'- to 5'-direction. The sequence is that of Polyribonucleotide nucleotidyltransferase from Xanthomonas oryzae pv. oryzae (strain MAFF 311018).